The following is a 155-amino-acid chain: Gas vesicle protein K (155 aa).

The protein belongs to the gas vesicle GvpK family.

Its subcellular location is the gas vesicle. In terms of biological role, might be involved in nucleating gas vesicle formation. Gas vesicles (GV) are hollow, gas filled proteinaceous nanostructures. During planktonic growth they allow positioning of the organism at a favorable depth for light or nutrient acquisition. The sequence is that of Gas vesicle protein K from Dolichospermum flosaquae (Anabaena flos-aquae).